A 113-amino-acid polypeptide reads, in one-letter code: Type III endosome membrane protein TEMP (113 aa).

The tract at residues 1 to 22 (MNETNKTLVGPSELPTASAVAP) is disordered. The Extracellular portion of the chain corresponds to 1–29 (MNETNKTLVGPSELPTASAVAPGPGTGAR). An N-linked (GlcNAc...) asparagine glycan is attached at Asn-5. The helical; Signal-anchor for type III membrane protein transmembrane segment at 30 to 50 (AWPVLVGFVLGAVVLSLLIAL) threads the bilayer. The Cytoplasmic portion of the chain corresponds to 51–113 (AAKCHLCRRY…TEGSRDHFSL (63 aa)). The segment at 66 to 113 (HRPLPETGRGGRPQVAEDEDDDGFIEDNYIQPGTGELGTEGSRDHFSL) is disordered. Over residues 81–90 (AEDEDDDGFI) the composition is skewed to acidic residues.

The protein localises to the membrane. It is found in the early endosome. The protein resides in the recycling endosome. It localises to the cell membrane. Its function is as follows. May be involved in membrane trafficking between endosomes and plasma membrane. The protein is Type III endosome membrane protein TEMP (C1orf210) of Homo sapiens (Human).